Here is a 340-residue protein sequence, read N- to C-terminus: Solute carrier family 35 member G3 (340 aa).

The disordered stretch occupies residues 11-33 (PDFTQPSPPSTPASLPSKHHHRC). 9 helical membrane-spanning segments follow: residues 39–59 (TKGL…VGPF), 69–89 (LPSL…ALLL), 107–127 (FLHA…VQVV), 160–180 (AWCG…PGLG), 189–209 (LYTA…SLGL), 223–243 (TVAF…LFVL), 257–277 (CVVA…YAVT), 283–303 (LVCA…YYVL), and 307–327 (VAPS…IITA). In terms of domain architecture, EamA 1 spans 51-176 (LSAGFVGPFS…STLGLIIIVG (126 aa)). Positions 274–327 (YAVTKAHPALVCAVLHSEVVVALMLQYYVLYETVAPSDIMGAGVVLGSIAIITA) constitute an EamA 2 domain.

It belongs to the SLC35G solute transporter family.

It is found in the membrane. This chain is Solute carrier family 35 member G3 (Slc35g3), found in Mus musculus (Mouse).